A 1073-amino-acid chain; its full sequence is PX domain-containing protein LEC1 (1073 aa).

Positions Cys218–Ser228 are enriched in basic and acidic residues. Residues Cys218–Ala240 form a disordered region. The span at Lys229 to Ser238 shows a compositional bias: low complexity. Residues Leu273 to Asp506 form the PX domain. Phosphoserine occurs at positions 310 and 451. Positions Ile431–Tyr456 are disordered. Residues Lys432–Phe453 show a composition bias toward acidic residues.

The protein resides in the endoplasmic reticulum membrane. It localises to the lipid droplet. Functionally, phosphoinositide-binding protein that plays a role in regulation of ergosterol distribution in the cell. Facilitates ergosterol transport between plasma membrane and lipid droplets. The protein is PX domain-containing protein LEC1 of Saccharomyces cerevisiae (strain ATCC 204508 / S288c) (Baker's yeast).